The sequence spans 1591 residues: Rho guanine nucleotide exchange factor TIAM1 (1591 aa).

The disordered stretch occupies residues 1–78 (MGNAESQHVE…AENGLEPFSQ (78 aa)). A lipid anchor (N-myristoyl glycine) is attached at G2. A compositionally biased stretch (basic and acidic residues) spans 7 to 19 (QHVEHEFYGEKHA). Residues 20 to 49 (SLGRKHTSRSLRLSHKTRRTRHASSGKVIH) show a composition bias toward basic residues. Low complexity predominate over residues 53-67 (EVSTRSSSTPSIPQS). Phosphoserine is present on S231. 2 disordered regions span residues 298 to 379 (SEGA…GDAA) and 393 to 422 (MSTT…SPGQ). 2 stretches are compositionally biased toward polar residues: residues 300–313 (GATN…NSMQ) and 340–361 (TTDT…SPTT). 2 positions are modified to phosphoserine: S356 and S358. The span at 367–377 (GSDSGSSSTGD) shows a compositional bias: low complexity. Residues 412 to 422 (QSSGTLSSPGQ) are compositionally biased toward polar residues. A PH 1 domain is found at 434-549 (VRKAGALAVK…TAIHSACATA (116 aa)). Residue S695 is modified to Phosphoserine. The region spanning 765–832 (TPSWFCLPNN…QPEEDIYELL (68 aa)) is the RBD domain. Position 829 is a phosphotyrosine; by NTRK2 (Y829). The 64-residue stretch at 845 to 908 (SIHIEKSDTA…NNRAADALNS (64 aa)) folds into the PDZ domain. The disordered stretch occupies residues 939 to 1034 (SPPHRVDGPA…TGPQLATMRQ (96 aa)). The span at 958-975 (LTSNPGHSLCSEQGSSAE) shows a compositional bias: polar residues. The segment covering 977 to 990 (APEETEGPDLESSD) has biased composition (acidic residues). Low complexity predominate over residues 1014–1024 (PSDQSPSPQDS). The segment covering 1025 to 1034 (TGPQLATMRQ) has biased composition (polar residues). Residues 1040 to 1234 (KLRKVICELL…NKVASHINEM (195 aa)) form the DH domain. The PH 2 domain maps to 1261–1397 (DLSMGDLLLH…KAVHSILRDK (137 aa)). Y1323 bears the Phosphotyrosine mark. Glycyl lysine isopeptide (Lys-Gly) (interchain with G-Cter in ubiquitin) cross-links involve residues K1404 and K1420. Positions 1456 to 1482 (TIDSDAVSASSPEKESQQPPGGGDTDR) are disordered. S1519 carries the phosphoserine modification.

This sequence belongs to the TIAM family. Component of the Par polarity complex, composed of at least phosphorylated PRKCZ, PARD3 and TIAM1. Interacts with NTRK2; mediates the activation of RAC1 by BDNF. Interacts with MAPK8IP2 and CD44. Interacts with BAIAP2. Interacts with EPHA8; regulates clathrin-mediated endocytosis of EPHA8. Interacts with PARD3. Interacts (via PDZ domain) with CNTNAP4, SDC1 and SDC3 (via C-terminus). Ubiquitinated. Undergoes 'Lys-48' ubiquitination at Lys-1404 and Lys-1420 by a CUL3(KBTBD6/7) E3 ubiquitin ligase complex composed of CUL3, RBX1, KBTBD6 and KBTBD7. 'Lys-48' ubiquitination at Lys-1404 and Lys-1420 triggers proteasomal degradation. Ubiquitination at Lys-1404 and Lys-1420 by CUL3(KBTBD6/7) also requires the membrane-associated protein GABARAP and may therefore be spatially restricted within the cell. As to expression, found in virtually all analyzed tumor cell lines including B- and T-lymphomas, neuroblastomas, melanomas and carcinomas.

It is found in the cell junction. It localises to the cell membrane. Its function is as follows. Guanyl-nucleotide exchange factor that activates RHO-like proteins and connects extracellular signals to cytoskeletal activities. Activates RAC1, CDC42, and to a lesser extent RHOA and their downstream signaling to regulate processes like cell adhesion and cell migration. This Homo sapiens (Human) protein is Rho guanine nucleotide exchange factor TIAM1.